Consider the following 151-residue polypeptide: Probable cGMP 3',5'-cyclic phosphodiesterase subunit delta (151 aa).

The protein belongs to the PDE6D/unc-119 family. In terms of assembly, interacts with Pde6.

The protein resides in the nucleus. Its subcellular location is the cytoplasm. The chain is Probable cGMP 3',5'-cyclic phosphodiesterase subunit delta from Drosophila sechellia (Fruit fly).